Consider the following 186-residue polypeptide: MATLDAIREALPEPARDIKLNLQAVLQPGTLTPAQRWGVAVATAAAARNERLLAAVLADARAEVEPAVVEDALAAAAVMAMNNVYYRFRHMVGKASYAEKPARLRMNRLVKPAASKVDFELFALAVSAVNGCETCVRSHEQVVVAGGLSEDQVHEAVRIAAVLHAAAVSLELAGYAAVPSAAAAAG.

The active-site Proton donor is cysteine 132. Cysteine 132 and cysteine 135 are disulfide-bonded. Cysteine 135 (cysteine sulfenic acid (-SOH) intermediate) is an active-site residue.

The protein belongs to the AhpD family.

It carries out the reaction N(6)-[(R)-dihydrolipoyl]-L-lysyl-[lipoyl-carrier protein] + a hydroperoxide = N(6)-[(R)-lipoyl]-L-lysyl-[lipoyl-carrier protein] + an alcohol + H2O. Functionally, antioxidant protein with alkyl hydroperoxidase activity. Required for the reduction of the AhpC active site cysteine residues and for the regeneration of the AhpC enzyme activity. The polypeptide is Alkyl hydroperoxide reductase AhpD (Anaeromyxobacter sp. (strain K)).